A 394-amino-acid chain; its full sequence is Dual-specificity RNA methyltransferase RlmN (394 aa).

The active-site Proton acceptor is Glu-92. Residues 98-341 (ENDRGTLCIS…TTVRRTRGDD (244 aa)) form the Radical SAM core domain. The cysteines at positions 105 and 346 are disulfide-linked. Residues Cys-112, Cys-116, and Cys-119 each contribute to the [4Fe-4S] cluster site. Residues 166 to 167 (GE), Ser-198, 220 to 222 (SLH), and Asn-303 each bind S-adenosyl-L-methionine. Cys-346 (S-methylcysteine intermediate) is an active-site residue. The disordered stretch occupies residues 374 to 394 (DSAVQRRADAAPSGSATETTR).

It belongs to the radical SAM superfamily. RlmN family. [4Fe-4S] cluster is required as a cofactor.

It is found in the cytoplasm. It carries out the reaction adenosine(2503) in 23S rRNA + 2 reduced [2Fe-2S]-[ferredoxin] + 2 S-adenosyl-L-methionine = 2-methyladenosine(2503) in 23S rRNA + 5'-deoxyadenosine + L-methionine + 2 oxidized [2Fe-2S]-[ferredoxin] + S-adenosyl-L-homocysteine. It catalyses the reaction adenosine(37) in tRNA + 2 reduced [2Fe-2S]-[ferredoxin] + 2 S-adenosyl-L-methionine = 2-methyladenosine(37) in tRNA + 5'-deoxyadenosine + L-methionine + 2 oxidized [2Fe-2S]-[ferredoxin] + S-adenosyl-L-homocysteine. Its function is as follows. Specifically methylates position 2 of adenine 2503 in 23S rRNA and position 2 of adenine 37 in tRNAs. m2A2503 modification seems to play a crucial role in the proofreading step occurring at the peptidyl transferase center and thus would serve to optimize ribosomal fidelity. The polypeptide is Dual-specificity RNA methyltransferase RlmN (Methylibium petroleiphilum (strain ATCC BAA-1232 / LMG 22953 / PM1)).